Consider the following 181-residue polypeptide: Large ribosomal subunit protein uL6 (181 aa).

This sequence belongs to the universal ribosomal protein uL6 family. As to quaternary structure, part of the 50S ribosomal subunit.

Its function is as follows. This protein binds to the 23S rRNA, and is important in its secondary structure. It is located near the subunit interface in the base of the L7/L12 stalk, and near the tRNA binding site of the peptidyltransferase center. The chain is Large ribosomal subunit protein uL6 from Vesicomyosocius okutanii subsp. Calyptogena okutanii (strain HA).